Consider the following 398-residue polypeptide: MSKTIAINAGSSSLKWQLYQMPEEEVLAQGIIERIGLKDSISTVKYDGKKEEQILDIHDHTEAVKILLNDLIHFGIIAAYDEITGVGHRVVAGGELFKESVVVNDKVLEQIEELSVLAPLHNPGAAAGIRAFRDILPDITSVCVFDTSFHTSMAKHTYLYPIPQKYYTDYKVRKYGAHGTSHKYVAQEAAKMLGRPLEELKLITAHIGNGVSITANYHGKSVDTSMGFTPLAGPMMGTRSGDIDPAIIPYLIEQDPELKDAADVVNMLNKKSGLSGVSGISSDMRDIEAGLQEDNPDAVLAYNIFIDRIKKCIGQYFAVLNGADALVFTAGMGENAPLMRQDVIGGLTWFGMDIDPEKNVFGYRGDISTPESKVKVLVISTDEELCIARDVERLKNTK.

Asparagine 8 is a Mg(2+) binding site. Lysine 15 contributes to the ATP binding site. Arginine 89 serves as a coordination point for substrate. The active-site Proton donor/acceptor is aspartate 146. ATP-binding positions include 206 to 210 (HIGNG), 283 to 285 (DMR), and 331 to 335 (GMGEN). Glutamate 383 contacts Mg(2+).

Belongs to the acetokinase family. In terms of assembly, homodimer. Mg(2+) serves as cofactor. Requires Mn(2+) as cofactor.

The protein localises to the cytoplasm. The catalysed reaction is acetate + ATP = acetyl phosphate + ADP. Its pathway is metabolic intermediate biosynthesis; acetyl-CoA biosynthesis; acetyl-CoA from acetate: step 1/2. Its function is as follows. Catalyzes the formation of acetyl phosphate from acetate and ATP. Can also catalyze the reverse reaction. This chain is Acetate kinase, found in Streptococcus pyogenes serotype M12 (strain MGAS2096).